Here is a 60-residue protein sequence, read N- to C-terminus: MAVPKFKPSKSRSRTRRSINMRKKIPQFQECSNCGNLAIRHRICAKCGYYRNSQYLELGL.

The protein belongs to the bacterial ribosomal protein bL32 family.

The polypeptide is Large ribosomal subunit protein bL32 (Borrelia duttonii (strain Ly)).